The chain runs to 538 residues: SWM histone demethylase complex subunit phf2 (538 aa).

Disordered stretches follow at residues 28-47 (RFPNDLHPTMFEGEESNQNG), 98-150 (EIES…SSPL), and 198-222 (TKSGRKVHRPNHFDPLVKLPTRRRG). Over residues 98–111 (EIESSKNQETDAKS) the composition is skewed to basic and acidic residues. A PHD-type zinc finger spans residues 232–288 (AMKCSVCQRLQSPPKNRIVFCDGCNTPFHQLCHEPYISDELLDSPNGEWFCDDCIRR). Over residues 367–392 (GDQYLSLNNGTESQSKTTKHSTSLPS) the composition is skewed to polar residues. The disordered stretch occupies residues 367 to 396 (GDQYLSLNNGTESQSKTTKHSTSLPSTEPV).

Component of the SWM histone demethylase complex composed of at least lsd1, lsd2, phf1 and phf2.

The protein resides in the nucleus. In terms of biological role, component of the SWM histone demethylase complex that specifically demethylates H3K9me2, a specific tag for epigenetic transcriptional activation, thereby acting as a corepressor. Has a role in regulating heterochromatin propagation and euchromatic transcription. In Schizosaccharomyces pombe (strain 972 / ATCC 24843) (Fission yeast), this protein is SWM histone demethylase complex subunit phf2 (phf2).